Consider the following 442-residue polypeptide: tRNA(Ile)-lysidine synthase (442 aa).

30–35 (SGGLDS) is an ATP binding site.

Belongs to the tRNA(Ile)-lysidine synthase family.

Its subcellular location is the cytoplasm. The catalysed reaction is cytidine(34) in tRNA(Ile2) + L-lysine + ATP = lysidine(34) in tRNA(Ile2) + AMP + diphosphate + H(+). In terms of biological role, ligates lysine onto the cytidine present at position 34 of the AUA codon-specific tRNA(Ile) that contains the anticodon CAU, in an ATP-dependent manner. Cytidine is converted to lysidine, thus changing the amino acid specificity of the tRNA from methionine to isoleucine. In Pseudomonas fluorescens (strain Pf0-1), this protein is tRNA(Ile)-lysidine synthase.